Consider the following 130-residue polypeptide: Small ribosomal subunit protein uS9 (130 aa).

The interval 105–130 (TRDSRMVERKKPGLKKARRASQFSKR) is disordered. Basic and acidic residues predominate over residues 106–115 (RDSRMVERKK). Residues 116–130 (PGLKKARRASQFSKR) are compositionally biased toward basic residues.

It belongs to the universal ribosomal protein uS9 family.

This chain is Small ribosomal subunit protein uS9, found in Oenococcus oeni (strain ATCC BAA-331 / PSU-1).